A 536-amino-acid chain; its full sequence is CTP synthase (536 aa).

Residues 1–268 (MSFKSIFLTG…VDFLLSKFGF (268 aa)) form an amidoligase domain region. CTP is bound at residue Ser14. Ser14 lines the UTP pocket. Position 15 to 20 (15 to 20 (SLGKGL)) interacts with ATP. Residue Tyr55 participates in L-glutamine binding. Asp72 contributes to the ATP binding site. 2 residues coordinate Mg(2+): Asp72 and Glu142. Residues 149 to 151 (DIE), 188 to 193 (KTKPTQ), and Lys224 contribute to the CTP site. Residues 188 to 193 (KTKPTQ) and Lys224 each bind UTP. In terms of domain architecture, Glutamine amidotransferase type-1 spans 294 to 532 (RIGLVGKYLE…LSAALDYSLE (239 aa)). An L-glutamine-binding site is contributed by Gly353. The active-site Nucleophile; for glutamine hydrolysis is Cys380. L-glutamine is bound by residues 381-384 (LGMQ), Glu404, and Arg460. Active-site residues include His505 and Glu507.

It belongs to the CTP synthase family. In terms of assembly, homotetramer.

The catalysed reaction is UTP + L-glutamine + ATP + H2O = CTP + L-glutamate + ADP + phosphate + 2 H(+). The enzyme catalyses L-glutamine + H2O = L-glutamate + NH4(+). It carries out the reaction UTP + NH4(+) + ATP = CTP + ADP + phosphate + 2 H(+). It functions in the pathway pyrimidine metabolism; CTP biosynthesis via de novo pathway; CTP from UDP: step 2/2. Its activity is regulated as follows. Allosterically activated by GTP, when glutamine is the substrate; GTP has no effect on the reaction when ammonia is the substrate. The allosteric effector GTP functions by stabilizing the protein conformation that binds the tetrahedral intermediate(s) formed during glutamine hydrolysis. Inhibited by the product CTP, via allosteric rather than competitive inhibition. Its function is as follows. Catalyzes the ATP-dependent amination of UTP to CTP with either L-glutamine or ammonia as the source of nitrogen. Regulates intracellular CTP levels through interactions with the four ribonucleotide triphosphates. The polypeptide is CTP synthase (Chlamydia muridarum (strain MoPn / Nigg)).